Here is a 373-residue protein sequence, read N- to C-terminus: MKLFLEKSRFLRFLENTTKIIESNNSNYELRGAYFQVRQDKIILISSNEDISIKNEYLLDGIKNKTEGESDFLVLNSLLKNIIKKCSDSIILEKEKNTLKIFSDLQSYEINLLDHERFPDIKFGLNNSQLQLKTEQFKQALKNVVFAADLSNAQELLLNSVNLSLKNNILTLVATNRARIAMQKIKTEDSQEFNLTINSKVVKELISLSMSNTLILSPGTFELKIKSGNLEIKTKVIEIPYMNVENVFPNKFNFVIHIDKKELLSLIDKVSIVNDEKNGNKILIEYNPSKKEKKLKLSSYWPDLGFSEVFSDNFEVESEILLKFFINANYLKESINVFDGMISIFITENKDRMVISSETNLNNKQLIAALRGH.

It belongs to the beta sliding clamp family. In terms of assembly, forms a ring-shaped head-to-tail homodimer around DNA which binds and tethers DNA polymerases and other proteins to the DNA. The DNA replisome complex has a single clamp-loading complex (3 tau and 1 each of delta, delta', psi and chi subunits) which binds 3 Pol III cores (1 core on the leading strand and 2 on the lagging strand) each with a beta sliding clamp dimer. Additional proteins in the replisome are other copies of gamma, psi and chi, Ssb, DNA helicase and RNA primase.

It is found in the cytoplasm. Its function is as follows. Confers DNA tethering and processivity to DNA polymerases and other proteins. Acts as a clamp, forming a ring around DNA (a reaction catalyzed by the clamp-loading complex) which diffuses in an ATP-independent manner freely and bidirectionally along dsDNA. Initially characterized for its ability to contact the catalytic subunit of DNA polymerase III (Pol III), a complex, multichain enzyme responsible for most of the replicative synthesis in bacteria; Pol III exhibits 3'-5' exonuclease proofreading activity. The beta chain is required for initiation of replication as well as for processivity of DNA replication. This is Beta sliding clamp (dnaN) from Mycoplasmopsis pulmonis (strain UAB CTIP) (Mycoplasma pulmonis).